Reading from the N-terminus, the 807-residue chain is Glycerol-3-phosphate acyltransferase (807 aa).

The HXXXXD motif signature appears at 305–310 (CHRSHM).

This sequence belongs to the GPAT/DAPAT family.

Its subcellular location is the cell inner membrane. The enzyme catalyses sn-glycerol 3-phosphate + an acyl-CoA = a 1-acyl-sn-glycero-3-phosphate + CoA. The protein operates within phospholipid metabolism; CDP-diacylglycerol biosynthesis; CDP-diacylglycerol from sn-glycerol 3-phosphate: step 1/3. This is Glycerol-3-phosphate acyltransferase from Klebsiella pneumoniae (strain 342).